A 418-amino-acid polypeptide reads, in one-letter code: Imidazolonepropionase (418 aa).

Residues histidine 79 and histidine 81 each coordinate Fe(3+). Zn(2+)-binding residues include histidine 79 and histidine 81. Positions 88, 151, and 184 each coordinate 4-imidazolone-5-propanoate. Tyrosine 151 contacts N-formimidoyl-L-glutamate. Histidine 249 contacts Fe(3+). Histidine 249 contacts Zn(2+). Glutamine 252 is a 4-imidazolone-5-propanoate binding site. Aspartate 324 contributes to the Fe(3+) binding site. Aspartate 324 contributes to the Zn(2+) binding site. 2 residues coordinate N-formimidoyl-L-glutamate: asparagine 326 and glycine 328. Residue threonine 329 participates in 4-imidazolone-5-propanoate binding.

It belongs to the metallo-dependent hydrolases superfamily. HutI family. Zn(2+) is required as a cofactor. It depends on Fe(3+) as a cofactor.

Its subcellular location is the cytoplasm. It catalyses the reaction 4-imidazolone-5-propanoate + H2O = N-formimidoyl-L-glutamate. It participates in amino-acid degradation; L-histidine degradation into L-glutamate; N-formimidoyl-L-glutamate from L-histidine: step 3/3. In terms of biological role, catalyzes the hydrolytic cleavage of the carbon-nitrogen bond in imidazolone-5-propanoate to yield N-formimidoyl-L-glutamate. It is the third step in the universal histidine degradation pathway. The protein is Imidazolonepropionase of Colwellia psychrerythraea (strain 34H / ATCC BAA-681) (Vibrio psychroerythus).